The following is a 349-amino-acid chain: Isopentenyl-diphosphate delta-isomerase (349 aa).

6–7 (RK) is a substrate binding site. Residues 62 to 64 (AMT), serine 93, and asparagine 122 contribute to the FMN site. Glutamine 152 contacts substrate. Position 153 (glutamate 153) interacts with Mg(2+). FMN is bound by residues lysine 184, threonine 214, 258-259 (GG), and 280-281 (AG).

It belongs to the IPP isomerase type 2 family. Homooctamer. Dimer of tetramers. FMN serves as cofactor. Requires NADPH as cofactor. It depends on Mg(2+) as a cofactor.

Its subcellular location is the cytoplasm. It catalyses the reaction isopentenyl diphosphate = dimethylallyl diphosphate. In terms of biological role, involved in the biosynthesis of isoprenoids. Catalyzes the 1,3-allylic rearrangement of the homoallylic substrate isopentenyl (IPP) to its allylic isomer, dimethylallyl diphosphate (DMAPP). The chain is Isopentenyl-diphosphate delta-isomerase from Bacillus mycoides (strain KBAB4) (Bacillus weihenstephanensis).